The following is a 104-amino-acid chain: Secreted RxLR effector protein 54 (104 aa).

An N-terminal signal peptide occupies residues 1 to 19 (MIFTLLGLALVATKSACIA). The short motif at 52–55 (RSLR) is the RxLR element. A glycan (N-linked (GlcNAc...) asparagine) is linked at Asn64.

This sequence belongs to the RxLR effector family.

The protein resides in the secreted. The protein localises to the host chloroplast envelope. It is found in the host mitochondrion. Its subcellular location is the host nucleus. It localises to the host cytoplasm. In terms of biological role, secreted effector that completely suppresses the host cell death induced by cell death-inducing proteins. In Plasmopara viticola (Downy mildew of grapevine), this protein is Secreted RxLR effector protein 54.